We begin with the raw amino-acid sequence, 425 residues long: Glutamyl-tRNA reductase (425 aa).

Residues 47-50 (TCNR), serine 107, 112-114 (EDQ), and glutamine 118 each bind substrate. Residue cysteine 48 is the Nucleophile of the active site. 187–192 (GAGHIA) provides a ligand contact to NADP(+).

It belongs to the glutamyl-tRNA reductase family. Homodimer.

The catalysed reaction is (S)-4-amino-5-oxopentanoate + tRNA(Glu) + NADP(+) = L-glutamyl-tRNA(Glu) + NADPH + H(+). It participates in porphyrin-containing compound metabolism; protoporphyrin-IX biosynthesis; 5-aminolevulinate from L-glutamyl-tRNA(Glu): step 1/2. It functions in the pathway porphyrin-containing compound metabolism; chlorophyll biosynthesis. Functionally, catalyzes the NADPH-dependent reduction of glutamyl-tRNA(Glu) to glutamate 1-semialdehyde (GSA). This is Glutamyl-tRNA reductase from Roseiflexus sp. (strain RS-1).